The following is a 545-amino-acid chain: CTP synthase (545 aa).

Residues 1-266 (MTTRYIFVTG…DDLVIKRFNL (266 aa)) are amidoligase domain. Serine 14 provides a ligand contact to CTP. Serine 14 is a UTP binding site. ATP contacts are provided by residues 15–20 (SLGKGI) and aspartate 72. Mg(2+)-binding residues include aspartate 72 and glutamate 140. CTP contacts are provided by residues 147–149 (DIE), 187–192 (KTKPTQ), and lysine 223. UTP contacts are provided by residues 187–192 (KTKPTQ) and lysine 223. 239-241 (KDV) is an ATP binding site. Residues 291–542 (TIGMVGKYIE…IAASYAYQKR (252 aa)) form the Glutamine amidotransferase type-1 domain. An L-glutamine-binding site is contributed by glycine 352. Cysteine 379 acts as the Nucleophile; for glutamine hydrolysis in catalysis. L-glutamine-binding positions include 380–383 (LGMQ), glutamate 403, and arginine 470. Residues histidine 515 and glutamate 517 contribute to the active site.

The protein belongs to the CTP synthase family. Homotetramer.

It catalyses the reaction UTP + L-glutamine + ATP + H2O = CTP + L-glutamate + ADP + phosphate + 2 H(+). The enzyme catalyses L-glutamine + H2O = L-glutamate + NH4(+). It carries out the reaction UTP + NH4(+) + ATP = CTP + ADP + phosphate + 2 H(+). It participates in pyrimidine metabolism; CTP biosynthesis via de novo pathway; CTP from UDP: step 2/2. Allosterically activated by GTP, when glutamine is the substrate; GTP has no effect on the reaction when ammonia is the substrate. The allosteric effector GTP functions by stabilizing the protein conformation that binds the tetrahedral intermediate(s) formed during glutamine hydrolysis. Inhibited by the product CTP, via allosteric rather than competitive inhibition. Its function is as follows. Catalyzes the ATP-dependent amination of UTP to CTP with either L-glutamine or ammonia as the source of nitrogen. Regulates intracellular CTP levels through interactions with the four ribonucleotide triphosphates. The polypeptide is CTP synthase (Shewanella frigidimarina (strain NCIMB 400)).